We begin with the raw amino-acid sequence, 2543 residues long: Polyketide synthase PksR (2543 aa).

The segment at 165-269 (LEIGAGTGGT…KAVLKKNGLL (105 aa)) is methyltransferase. The Carrier 1 domain maps to 376 to 452 (SLIEQTAQFV…ELVEYLVKGH (77 aa)). The residue at position 413 (serine 413) is an O-(pantetheine 4'-phosphoryl)serine. The interval 465–485 (TKPAKNEAPLQTERTDPNKPF) is disordered. Residues 527 to 959 (TEDIAIIGVS…GAYANLIIEE (433 aa)) form the Ketosynthase family 3 (KS3) 1 domain. Cysteine 700 serves as the catalytic For beta-ketoacyl synthase 1 activity. Residues 1114–1242 (HFDVSSINEK…GQCGIGSFEP (129 aa)) form an N-terminal hotdog fold region. Residues 1114–1397 (HFDVSSINEK…LKQLRISNQR (284 aa)) enclose the PKS/mFAS DH domain. The C-terminal hotdog fold stretch occupies residues 1255–1397 (TKLHHIDQMY…LKQLRISNQR (143 aa)). The Carrier 2 domain maps to 1407–1485 (SNLKARIRSY…ELIDFFADKH (79 aa)). The residue at position 1445 (serine 1445) is an O-(pantetheine 4'-phosphoryl)serine. Residues 1528–1946 (ADGIAIIGMS…GVNAHVILEE (419 aa)) form the Ketosynthase family 3 (KS3) 2 domain. Active-site for beta-ketoacyl synthase 2 activity residues include cysteine 1680, histidine 1815, and histidine 1862. A Carrier 3 domain is found at 2134–2208 (RINNSSDHHI…DMMDLIAKKQ (75 aa)). Serine 2168 bears the O-(pantetheine 4'-phosphoryl)serine mark. The interval 2234–2514 (RPVFWFHGGV…EFCEKLYSNR (281 aa)) is thioesterase.

The cofactor is pantetheine 4'-phosphate.

It is found in the cytoplasm. It participates in antibiotic biosynthesis; bacillaene biosynthesis. In terms of biological role, involved in some intermediate steps for the synthesis of the antibiotic polyketide bacillaene which is involved in secondary metabolism. The protein is Polyketide synthase PksR (pksR) of Bacillus subtilis (strain 168).